The primary structure comprises 185 residues: Elongation factor P (185 aa).

This sequence belongs to the elongation factor P family.

Its subcellular location is the cytoplasm. The protein operates within protein biosynthesis; polypeptide chain elongation. Involved in peptide bond synthesis. Stimulates efficient translation and peptide-bond synthesis on native or reconstituted 70S ribosomes in vitro. Probably functions indirectly by altering the affinity of the ribosome for aminoacyl-tRNA, thus increasing their reactivity as acceptors for peptidyl transferase. The polypeptide is Elongation factor P (Trichodesmium erythraeum (strain IMS101)).